The following is a 586-amino-acid chain: MKDYVRIKIASPQQVLSWTERSLPDGRLIGRLTNFDMLHFETKKPVFGGLLCERIFGSTKTNQCFCGKYKKMFQKGYANNFVLVCANCFVEINNCNRRRFRMGYIDLVFPLIHTWYLKSRPCYLAIMLGKKVKNIKKMCFMDSYIKIRNNDGQTVGILTGAEAIYSRLSKIDLESLIEFLYKRLVGIEKLKEYNFEKYLWLRKKFINRIKLVNAFIQTNTKPIWIMIHFLPVLPPDIRPVVKLQDGTVIMTDLNFLYIDIIYGNNKIIKLRKFLLPEEFMLNEKRSLQVKVDAFINNENISENPYEQNDKKLKSITEGLKGKKGRFRENLLGKTVDYSGRSVIVVEPKLLLHECGMPLDIALELFHPILIKMLIRFKFSVGIREAKRHIYNASNFVIPVLEKVLNSYFILLNRAPTLHRLGIQSFQPKVTFEKAILLHPLVCSAFNADFDGDQMGIHIPLSLKSLAEARSMLISINNCVLPANGLPSILPSQDMVLGCYYVTLENCNLDFILTNLKIYANIEKVKSAYHKGEILIQTFVWLICQKFPNILKNSKIRIKKKRMVKKLVFFRTTIGRIFFDDMIKEFL.

Zn(2+)-binding residues include cysteine 64, cysteine 66, cysteine 85, and cysteine 88. Mg(2+) contacts are provided by aspartate 448, aspartate 450, and aspartate 452.

Belongs to the RNA polymerase beta' chain family. RpoC1 subfamily. In terms of assembly, in plastids the minimal PEP RNA polymerase catalytic core is composed of four subunits: alpha, beta, beta', and beta''. When a (nuclear-encoded) sigma factor is associated with the core the holoenzyme is formed, which can initiate transcription. Mg(2+) is required as a cofactor. The cofactor is Zn(2+).

Its subcellular location is the plastid. It is found in the chloroplast. The catalysed reaction is RNA(n) + a ribonucleoside 5'-triphosphate = RNA(n+1) + diphosphate. Its function is as follows. DNA-dependent RNA polymerase catalyzes the transcription of DNA into RNA using the four ribonucleoside triphosphates as substrates. The protein is DNA-directed RNA polymerase subunit beta' of Euglena gracilis.